We begin with the raw amino-acid sequence, 368 residues long: H-2 class I histocompatibility antigen, K-D alpha chain (368 aa).

An N-terminal signal peptide occupies residues 1-21 (MAPCTLLLLLAAALAPTQTRA). The tract at residues 22–111 (GPHSLRYFVT…AQRYYNQSKG (90 aa)) is alpha-1. The Extracellular segment spans residues 22-305 (GPHSLRYFVT…KLPPSTVSNT (284 aa)). N-linked (GlcNAc...) asparagine glycosylation occurs at Asn-107. The tract at residues 112-203 (GSHTFQRMFG…ELGNETLLRT (92 aa)) is alpha-2. Cys-122 and Cys-185 are oxidised to a cystine. Residues Asn-197 and Asn-277 are each glycosylated (N-linked (GlcNAc...) asparagine). The alpha-3 stretch occupies residues 204–295 (DSPKAHVTYH…GLPEPLTLRW (92 aa)). In terms of domain architecture, Ig-like C1-type spans 206–294 (PKAHVTYHPR…KGLPEPLTLR (89 aa)). The cysteines at positions 224 and 280 are disulfide-linked. The connecting peptide stretch occupies residues 296–305 (KLPPSTVSNT). A helical transmembrane segment spans residues 306-328 (VIIAVLVVLGAAIVTGAVVAFVM). The Cytoplasmic segment spans residues 329–368 (KMRRNTGGKGVNYALAPGSQTSDLSLPDGKVMVHDPHSLA). 2 positions are modified to phosphoserine: Ser-350 and Ser-353.

The protein belongs to the MHC class I family. As to quaternary structure, heterodimer of an alpha chain and a beta chain (beta-2-microglobulin).

The protein localises to the membrane. Functionally, involved in the presentation of foreign antigens to the immune system. In Mus musculus (Mouse), this protein is H-2 class I histocompatibility antigen, K-D alpha chain (H2-K1).